Here is an 855-residue protein sequence, read N- to C-terminus: Replication factor C small subunit (855 aa).

One can recognise a DOD-type homing endonuclease domain in the interval 185–308 (WLGYFLGGGY…IAYALAGFGI (124 aa)).

It belongs to the activator 1 small subunits family. RfcS subfamily. As to quaternary structure, heteromultimer composed of small subunits (RfcS) and large subunits (RfcL). In terms of processing, this protein undergoes a protein self splicing that involves a post-translational excision of the intervening region (intein) followed by peptide ligation.

Part of the RFC clamp loader complex which loads the PCNA sliding clamp onto DNA. This Pyrococcus horikoshii (strain ATCC 700860 / DSM 12428 / JCM 9974 / NBRC 100139 / OT-3) protein is Replication factor C small subunit (rfcS).